The primary structure comprises 138 residues: ATP synthase epsilon chain (138 aa).

Belongs to the ATPase epsilon chain family. In terms of assembly, F-type ATPases have 2 components, CF(1) - the catalytic core - and CF(0) - the membrane proton channel. CF(1) has five subunits: alpha(3), beta(3), gamma(1), delta(1), epsilon(1). CF(0) has three main subunits: a, b and c.

The protein localises to the cell inner membrane. Functionally, produces ATP from ADP in the presence of a proton gradient across the membrane. This chain is ATP synthase epsilon chain, found in Endomicrobium trichonymphae.